Here is an 86-residue protein sequence, read N- to C-terminus: MSIDTQSIIENNKRSAHDTGSPEVQVALLTARIELLTKHFKIHKKDHHSRRGLLQMVNRRRSLLDYLNKKENERYKLLIEKLGLRR.

Polar residues predominate over residues 1 to 10; it reads MSIDTQSIIE. Positions 1–21 are disordered; sequence MSIDTQSIIENNKRSAHDTGS.

This sequence belongs to the universal ribosomal protein uS15 family. Part of the 30S ribosomal subunit. Forms a bridge to the 50S subunit in the 70S ribosome, contacting the 23S rRNA.

Functionally, one of the primary rRNA binding proteins, it binds directly to 16S rRNA where it helps nucleate assembly of the platform of the 30S subunit by binding and bridging several RNA helices of the 16S rRNA. Its function is as follows. Forms an intersubunit bridge (bridge B4) with the 23S rRNA of the 50S subunit in the ribosome. The chain is Small ribosomal subunit protein uS15 from Xylella fastidiosa (strain M23).